We begin with the raw amino-acid sequence, 381 residues long: Beta-lactamase CMY-4 (381 aa).

Positions 1-20 are cleaved as a signal peptide; sequence MMKKSLCCALLLTASFSTFA. The Acyl-ester intermediate role is filled by S84. The a beta-lactam site is built by S84, Q140, Y170, and N172.

It belongs to the class-C beta-lactamase family.

The catalysed reaction is a beta-lactam + H2O = a substituted beta-amino acid. Functionally, class C beta-lactamase which confers resistance to penicillins and cephalosporins. In Klebsiella pneumoniae, this protein is Beta-lactamase CMY-4.